The sequence spans 96 residues: CRISPR-associated endoribonuclease Cas2 1 (96 aa).

Residue D8 participates in Mg(2+) binding.

Belongs to the CRISPR-associated endoribonuclease Cas2 protein family. In terms of assembly, homodimer, forms a heterotetramer with a Cas1 homodimer. The cofactor is Mg(2+).

Its function is as follows. CRISPR (clustered regularly interspaced short palindromic repeat), is an adaptive immune system that provides protection against mobile genetic elements (viruses, transposable elements and conjugative plasmids). CRISPR clusters contain sequences complementary to antecedent mobile elements and target invading nucleic acids. CRISPR clusters are transcribed and processed into CRISPR RNA (crRNA). Functions as a ssRNA-specific endoribonuclease. Involved in the integration of spacer DNA into the CRISPR cassette. The protein is CRISPR-associated endoribonuclease Cas2 1 of Moorella thermoacetica (strain ATCC 39073 / JCM 9320).